Here is a 189-residue protein sequence, read N- to C-terminus: Segregation and condensation protein B (189 aa).

This sequence belongs to the ScpB family. In terms of assembly, homodimer. Homodimerization may be required to stabilize the binding of ScpA to the Smc head domains. Component of a cohesin-like complex composed of ScpA, ScpB and the Smc homodimer, in which ScpA and ScpB bind to the head domain of Smc. The presence of the three proteins is required for the association of the complex with DNA.

It localises to the cytoplasm. Its function is as follows. Participates in chromosomal partition during cell division. May act via the formation of a condensin-like complex containing Smc and ScpA that pull DNA away from mid-cell into both cell halves. This chain is Segregation and condensation protein B, found in Streptococcus pneumoniae serotype 19F (strain G54).